The primary structure comprises 761 residues: Mitochondrial intermediate peptidase (761 aa).

A mitochondrion-targeting transit peptide spans 1–37; that stretch reads MLIQKILLNKEISRLPRILSILNYTGLRWLSGSSGRN. His547 contributes to the Zn(2+) binding site. Residue Glu548 is part of the active site. His551 and His554 together coordinate Zn(2+).

It belongs to the peptidase M3 family. Zn(2+) serves as cofactor.

The protein localises to the mitochondrion matrix. It carries out the reaction Release of an N-terminal octapeptide as second stage of processing of some proteins imported into the mitochondrion.. Functionally, cleaves proteins, imported into the mitochondrion, to their mature size. While most mitochondrial precursor proteins are processed to the mature form in one step by mitochondrial processing peptidase (MPP), the sequential cleavage by MIP of an octapeptide after initial processing by MPP is a required step for a subgroup of nuclear-encoded precursor proteins destined for the matrix or the inner membrane. The polypeptide is Mitochondrial intermediate peptidase (OCT1) (Candida glabrata (strain ATCC 2001 / BCRC 20586 / JCM 3761 / NBRC 0622 / NRRL Y-65 / CBS 138) (Yeast)).